We begin with the raw amino-acid sequence, 350 residues long: Protein-glutamate methylesterase/protein-glutamine glutaminase 1 (350 aa).

In terms of domain architecture, Response regulatory spans 1–116 (MVVDDSAVVR…KGFLHDSAKV (116 aa)). A 4-aspartylphosphate modification is found at Asp-50. Positions 160–350 (LKTTEQLVAI…IPQAILDCSH (191 aa)) constitute a CheB-type methylesterase domain. Catalysis depends on residues Ser-172, His-198, and Asp-294.

This sequence belongs to the CheB family. Phosphorylated by CheA. Phosphorylation of the N-terminal regulatory domain activates the methylesterase activity.

It is found in the cytoplasm. It catalyses the reaction [protein]-L-glutamate 5-O-methyl ester + H2O = L-glutamyl-[protein] + methanol + H(+). It carries out the reaction L-glutaminyl-[protein] + H2O = L-glutamyl-[protein] + NH4(+). Involved in chemotaxis. Part of a chemotaxis signal transduction system that modulates chemotaxis in response to various stimuli. Catalyzes the demethylation of specific methylglutamate residues introduced into the chemoreceptors (methyl-accepting chemotaxis proteins or MCP) by CheR. Also mediates the irreversible deamidation of specific glutamine residues to glutamic acid. This chain is Protein-glutamate methylesterase/protein-glutamine glutaminase 1, found in Photobacterium profundum (strain SS9).